The chain runs to 783 residues: ATP-dependent zinc metalloprotease FtsH (783 aa).

Over residues 1 to 16 (MSETPNTNEQNNPNNQ) the composition is skewed to low complexity. Residues 1–79 (MSETPNTNEQ…DKEEDFASRL (79 aa)) are disordered. Residues 1–86 (MSETPNTNEQ…SRLNTRPPQR (86 aa)) are Cytoplasmic-facing. The span at 35–61 (MPERPERHNQADGAPKRPGDDDRKSER) shows a compositional bias: basic and acidic residues. Residues 87–107 (ASIITIIIIFLVAFFIGSQMM) traverse the membrane as a helical segment. Residues 108 to 233 (NMVHGEETDD…EYQVTLPSNV (126 aa)) lie on the Extracellular side of the membrane. Residues 234-254 (TEILISVLPMLLFAGLLIYFF) form a helical membrane-spanning segment. At 255-783 (SQMSKANNSQ…APQPPAAPQQ (529 aa)) the chain is on the cytoplasmic side. 325-332 (GPPGTGKT) provides a ligand contact to ATP. Histidine 547 is a Zn(2+) binding site. The active site involves glutamate 548. Positions 551 and 623 each coordinate Zn(2+). The span at 738–771 (EAAAKAADQAEQPQVEAEPVAQVATPAAPVAPAV) shows a compositional bias: low complexity. The tract at residues 738–783 (EAAAKAADQAEQPQVEAEPVAQVATPAAPVAPAVPEAPQPPAAPQQ) is disordered. Pro residues predominate over residues 772–783 (PEAPQPPAAPQQ).

The protein in the central section; belongs to the AAA ATPase family. It in the C-terminal section; belongs to the peptidase M41 family. In terms of assembly, homohexamer. Zn(2+) is required as a cofactor.

The protein resides in the cell membrane. Its function is as follows. Acts as a processive, ATP-dependent zinc metallopeptidase for both cytoplasmic and membrane proteins. Plays a role in the quality control of integral membrane proteins. In Slackia heliotrinireducens (strain ATCC 29202 / DSM 20476 / NCTC 11029 / RHS 1) (Peptococcus heliotrinreducens), this protein is ATP-dependent zinc metalloprotease FtsH.